Reading from the N-terminus, the 201-residue chain is Ribosome maturation factor RimM (201 aa).

The 75-residue stretch at 94–168 folds into the PRC barrel domain; it reads EDEYYHADLI…RLVADPPLGL (75 aa). The segment at 164–201 is disordered; that stretch reads PPLGLLDDTRPPAGVEGEVEEDPGVGIDEDGDGKGGAS. Residues 180 to 194 show a composition bias toward acidic residues; the sequence is GEVEEDPGVGIDEDG.

This sequence belongs to the RimM family. In terms of assembly, binds ribosomal protein uS19.

The protein localises to the cytoplasm. Functionally, an accessory protein needed during the final step in the assembly of 30S ribosomal subunit, possibly for assembly of the head region. Essential for efficient processing of 16S rRNA. May be needed both before and after RbfA during the maturation of 16S rRNA. It has affinity for free ribosomal 30S subunits but not for 70S ribosomes. In Rhodospirillum rubrum (strain ATCC 11170 / ATH 1.1.1 / DSM 467 / LMG 4362 / NCIMB 8255 / S1), this protein is Ribosome maturation factor RimM.